The primary structure comprises 453 residues: tRNA modification GTPase MnmE (453 aa).

(6S)-5-formyl-5,6,7,8-tetrahydrofolate is bound by residues Arg-22, Glu-79, and Lys-119. Positions 215 to 376 constitute a TrmE-type G domain; the sequence is GMKVVIAGRP…LRNHLKECMG (162 aa). Asn-225 serves as a coordination point for K(+). Residues 225–230, 244–250, 269–272, and 334–337 contribute to the GTP site; these read NAGKSS, TDIAGTT, DTAG, and NKAD. Residue Ser-229 participates in Mg(2+) binding. Positions 244, 246, and 249 each coordinate K(+). A Mg(2+)-binding site is contributed by Thr-250. Lys-453 lines the (6S)-5-formyl-5,6,7,8-tetrahydrofolate pocket.

It belongs to the TRAFAC class TrmE-Era-EngA-EngB-Septin-like GTPase superfamily. TrmE GTPase family. In terms of assembly, homodimer. Heterotetramer of two MnmE and two MnmG subunits. It depends on K(+) as a cofactor.

Its subcellular location is the cytoplasm. In terms of biological role, exhibits a very high intrinsic GTPase hydrolysis rate. Involved in the addition of a carboxymethylaminomethyl (cmnm) group at the wobble position (U34) of certain tRNAs, forming tRNA-cmnm(5)s(2)U34. This Vibrio vulnificus (strain YJ016) protein is tRNA modification GTPase MnmE.